We begin with the raw amino-acid sequence, 152 residues long: Ribonuclease pancreatic beta-type (152 aa).

Positions 1–25 (MGLXKSFALFSLLVLVLGWVQPSLS) are cleaved as a signal peptide. The disordered stretch occupies residues 25–53 (SGESRESSADKFKRQHMDPDSPSKSSPTY). Residues 27-45 (ESRESSADKFKRQHMDPDS) are compositionally biased toward basic and acidic residues. Substrate-binding residues include Lys-35 and Arg-38. The active-site Proton acceptor is the His-40. Intrachain disulfides connect Cys-54–Cys-112, Cys-68–Cys-123, Cys-86–Cys-138, and Cys-93–Cys-100. Substrate contacts are provided by residues 69–73 (KRVNT) and Lys-94. His-147 serves as the catalytic Proton donor.

Belongs to the pancreatic ribonuclease family. In terms of assembly, monomer.

Its subcellular location is the secreted. It carries out the reaction an [RNA] containing cytidine + H2O = an [RNA]-3'-cytidine-3'-phosphate + a 5'-hydroxy-ribonucleotide-3'-[RNA].. The enzyme catalyses an [RNA] containing uridine + H2O = an [RNA]-3'-uridine-3'-phosphate + a 5'-hydroxy-ribonucleotide-3'-[RNA].. Functionally, endonuclease that catalyzes the cleavage of RNA on the 3' side of pyrimidine nucleotides. Acts on single-stranded and double-stranded RNA. The polypeptide is Ribonuclease pancreatic beta-type (Rattus tiomanicus (Malayan field rat)).